The sequence spans 103 residues: Sperm-associated antigen 11B (103 aa).

A signal peptide spans 1-25 (MRQRLLPSVTSLLLVALLFPGSSQA). N-linked (GlcNAc...) asparagine glycosylation is present at Asn29.

The protein belongs to the SPAG11 family. In terms of tissue distribution, specifically expressed in caput and proximal corpus of epididymis (at protein level). Present in the epididymal epithelium and on the sperm surface, with a subacrosomal equatorial distribution on the sperm head (at protein level).

The protein resides in the secreted. In terms of biological role, has antimicrobial activity against E.coli. Plays a role in the defense response in the male reproductive tract, contributing to sperm maturation, storage and protection. The polypeptide is Sperm-associated antigen 11B (Homo sapiens (Human)).